The primary structure comprises 261 residues: Ribosomal RNA small subunit methyltransferase J (261 aa).

S-adenosyl-L-methionine-binding positions include 129 to 130 and Asp-182; that span reads ER.

This sequence belongs to the methyltransferase superfamily. RsmJ family.

It localises to the cytoplasm. It catalyses the reaction guanosine(1516) in 16S rRNA + S-adenosyl-L-methionine = N(2)-methylguanosine(1516) in 16S rRNA + S-adenosyl-L-homocysteine + H(+). In terms of biological role, specifically methylates the guanosine in position 1516 of 16S rRNA. In Desulfotalea psychrophila (strain LSv54 / DSM 12343), this protein is Ribosomal RNA small subunit methyltransferase J.